The following is a 377-amino-acid chain: Nitric oxide reductase FlRd-NAD(+) reductase (377 aa).

This sequence belongs to the FAD-dependent oxidoreductase family. The cofactor is FAD.

The protein resides in the cytoplasm. It carries out the reaction 2 reduced [nitric oxide reductase rubredoxin domain] + NAD(+) + H(+) = 2 oxidized [nitric oxide reductase rubredoxin domain] + NADH. The protein operates within nitrogen metabolism; nitric oxide reduction. One of at least two accessory proteins for anaerobic nitric oxide (NO) reductase. Reduces the rubredoxin moiety of NO reductase. The protein is Nitric oxide reductase FlRd-NAD(+) reductase of Salmonella typhimurium (strain LT2 / SGSC1412 / ATCC 700720).